The following is a 316-amino-acid chain: Alkaline ceramidase YPC1 (316 aa).

The Lumenal segment spans residues 1–36 (MGIFRWNYPESSVPGVWGETTSTIDWCEENYVVSPY). A disulfide bridge connects residues cysteine 27 and cysteine 219. The stretch at 37-57 (IAEWSNTLTNSVFILSAIYTT) is an intramembrane region. Residues 58-68 (YSAYKNKLEKR) are Lumenal-facing. Residues 69–89 (FLLIGFGYGLVGVGSWLFHMT) lie within the membrane without spanning it. Residues 90 to 93 (LKYR) are Lumenal-facing. Residues 94–114 (FQLLDELPMIYAMCIPTWSLV) form a helical membrane-spanning segment. The Cytoplasmic portion of the chain corresponds to 115–135 (CEAKEALLNGDNHKKVPLFEQ). The helical transmembrane segment at 136 to 156 (IFIGVIIGLAVTTASILYVIY) threads the bilayer. Over 157–160 (KNVD) the chain is Lumenal. An intramembrane segment occupies 161–181 (IHQILFGVQIVVVAATAGSLT). Over 182-195 (YRYVHDPLAKRNLK) the chain is Lumenal. The stretch at 196 to 216 (ASMALGAILFLSGYISWLLDI) is an intramembrane region. Residues 217 to 228 (HYCSFWVHVRRS) lie on the Lumenal side of the membrane. A helical membrane pass occupies residues 229 to 249 (ILALPLGVLLEPHGWWHILTG). Topologically, residues 250–316 (MGIYFYIVSL…DQSIEVKKEK (67 aa)) are cytoplasmic.

It belongs to the alkaline ceramidase family.

It is found in the endoplasmic reticulum membrane. The enzyme catalyses N-hexanoyl-sphinganine + H2O = hexanoate + sphinganine. It carries out the reaction sphinganine + hexadecanoate = N-hexadecanoylsphinganine + H2O. The catalysed reaction is N-hexadecanoyl-(4R)-hydroxysphinganine + H2O = (4R)-hydroxysphinganine + hexadecanoate. It catalyses the reaction N-hexadecanoylsphing-4-enine + H2O = sphing-4-enine + hexadecanoate. The enzyme catalyses an N-acyl-(4R)-4-hydroxysphinganine + H2O = (4R)-hydroxysphinganine + a fatty acid. In terms of biological role, alkaline ceramidase that hydrolyzes phytoceramide and also dihydroceramide into phytosphingosine or dihydrosphingosine. Prefers phytoceramide. Also has reverse activity as acyl-CoA-independent ceramide synthase, catalyzing synthesis of phytoceramide and dihydroceramide from palmitic acid and phytosphingosine or dihydrosphingosine. Is not responsible for the breakdown of unsaturated ceramide. Preferentially uses very long chain fatty acids (C-24 and C-26) in vivo compared to C-16 in vitro. This chain is Alkaline ceramidase YPC1 (YPC1), found in Saccharomyces cerevisiae (strain ATCC 204508 / S288c) (Baker's yeast).